Reading from the N-terminus, the 861-residue chain is Valine--tRNA ligase (861 aa).

A 'HIGH' region motif is present at residues 42–52; the sequence is PNITGRIHMGH. The 'KMSKS' region motif lies at 521–525; that stretch reads KMSKS. Lysine 524 is a binding site for ATP. A coiled-coil region spans residues 792-861; that stretch reads VAGLNLQSEI…ILNQILGDLM (70 aa).

Belongs to the class-I aminoacyl-tRNA synthetase family. ValS type 1 subfamily. Monomer.

Its subcellular location is the cytoplasm. It catalyses the reaction tRNA(Val) + L-valine + ATP = L-valyl-tRNA(Val) + AMP + diphosphate. Functionally, catalyzes the attachment of valine to tRNA(Val). As ValRS can inadvertently accommodate and process structurally similar amino acids such as threonine, to avoid such errors, it has a 'posttransfer' editing activity that hydrolyzes mischarged Thr-tRNA(Val) in a tRNA-dependent manner. This Pseudothermotoga lettingae (strain ATCC BAA-301 / DSM 14385 / NBRC 107922 / TMO) (Thermotoga lettingae) protein is Valine--tRNA ligase.